The following is a 315-amino-acid chain: Replication factor C small subunit (315 aa).

43-50 (GSPGVGKT) provides a ligand contact to ATP.

It belongs to the activator 1 small subunits family. RfcS subfamily. As to quaternary structure, heteromultimer composed of small subunits (RfcS) and large subunits (RfcL).

Functionally, part of the RFC clamp loader complex which loads the PCNA sliding clamp onto DNA. The protein is Replication factor C small subunit of Methanococcus maripaludis (strain C7 / ATCC BAA-1331).